Reading from the N-terminus, the 117-residue chain is Ribonuclease P protein component (117 aa).

This sequence belongs to the RnpA family. In terms of assembly, consists of a catalytic RNA component (M1 or rnpB) and a protein subunit.

It carries out the reaction Endonucleolytic cleavage of RNA, removing 5'-extranucleotides from tRNA precursor.. In terms of biological role, RNaseP catalyzes the removal of the 5'-leader sequence from pre-tRNA to produce the mature 5'-terminus. It can also cleave other RNA substrates such as 4.5S RNA. The protein component plays an auxiliary but essential role in vivo by binding to the 5'-leader sequence and broadening the substrate specificity of the ribozyme. In Nocardioides sp. (strain ATCC BAA-499 / JS614), this protein is Ribonuclease P protein component.